Consider the following 351-residue polypeptide: Serine/threonine-protein kinase mos (351 aa).

In terms of domain architecture, Protein kinase spans 71-340 (FSIDGVIGSG…ERRTDDTENL (270 aa)). ATP is bound by residues 77 to 85 (IGSGGFGSV) and lysine 98. The Proton acceptor role is filled by aspartate 194.

The protein belongs to the protein kinase superfamily. Ser/Thr protein kinase family.

It catalyses the reaction L-seryl-[protein] + ATP = O-phospho-L-seryl-[protein] + ADP + H(+). The catalysed reaction is L-threonyl-[protein] + ATP = O-phospho-L-threonyl-[protein] + ADP + H(+). Suppresses the mitotic cell cycle in oocytes, forcing them to undergo meiosis II to produce haploid gametes. Acts as a MAPK kinase kinase (MAP3K) that acts upstream of MAP kinase in oocytes. This is Serine/threonine-protein kinase mos from Patiria pectinifera (Starfish).